A 357-amino-acid polypeptide reads, in one-letter code: UDP-N-acetylglucosamine--N-acetylmuramyl-(pentapeptide) pyrophosphoryl-undecaprenol N-acetylglucosamine transferase (357 aa).

UDP-N-acetyl-alpha-D-glucosamine-binding positions include 11–13 (TGG), Asn123, Arg159, Ser187, Ile241, 260–265 (ALTVAE), and Gln286.

This sequence belongs to the glycosyltransferase 28 family. MurG subfamily.

The protein localises to the cell inner membrane. The enzyme catalyses di-trans,octa-cis-undecaprenyl diphospho-N-acetyl-alpha-D-muramoyl-L-alanyl-D-glutamyl-meso-2,6-diaminopimeloyl-D-alanyl-D-alanine + UDP-N-acetyl-alpha-D-glucosamine = di-trans,octa-cis-undecaprenyl diphospho-[N-acetyl-alpha-D-glucosaminyl-(1-&gt;4)]-N-acetyl-alpha-D-muramoyl-L-alanyl-D-glutamyl-meso-2,6-diaminopimeloyl-D-alanyl-D-alanine + UDP + H(+). Its pathway is cell wall biogenesis; peptidoglycan biosynthesis. Its function is as follows. Cell wall formation. Catalyzes the transfer of a GlcNAc subunit on undecaprenyl-pyrophosphoryl-MurNAc-pentapeptide (lipid intermediate I) to form undecaprenyl-pyrophosphoryl-MurNAc-(pentapeptide)GlcNAc (lipid intermediate II). This is UDP-N-acetylglucosamine--N-acetylmuramyl-(pentapeptide) pyrophosphoryl-undecaprenol N-acetylglucosamine transferase from Aromatoleum aromaticum (strain DSM 19018 / LMG 30748 / EbN1) (Azoarcus sp. (strain EbN1)).